The following is a 689-amino-acid chain: Glycine--tRNA ligase beta subunit (689 aa).

The protein belongs to the class-II aminoacyl-tRNA synthetase family. In terms of assembly, tetramer of two alpha and two beta subunits.

Its subcellular location is the cytoplasm. It catalyses the reaction tRNA(Gly) + glycine + ATP = glycyl-tRNA(Gly) + AMP + diphosphate. The chain is Glycine--tRNA ligase beta subunit from Citrobacter koseri (strain ATCC BAA-895 / CDC 4225-83 / SGSC4696).